Consider the following 819-residue polypeptide: Probable cadmium/zinc-transporting ATPase HMA1, chloroplastic (819 aa).

The transit peptide at 1-17 directs the protein to the chloroplast; that stretch reads MEPATLTRSSSLTRFPY. Topologically, residues 18–122 are stromal; the sequence is RRGLSTLRLA…IGWVRLANYL (105 aa). Positions 66-79 are enriched in basic and acidic residues; that stretch reads DHHHDHHHDDEQDH. Residues 66-87 are disordered; that stretch reads DHHHDHHHDDEQDHHNHHHHHH. A helical transmembrane segment spans residues 123 to 144; it reads REHLHLCCSAAAMFLAAAVCPY. Residues 145–153 lie on the Lumenal side of the membrane; that stretch reads LAPEPYIKS. Residues 154-173 form a helical membrane-spanning segment; the sequence is LQNAFMIVGFPLVGVSASLD. Over 174–180 the chain is Stromal; sequence ALMDIAG. The chain crosses the membrane as a helical span at residues 181 to 201; it reads GKVNIHVLMALAAFASVFMGN. Residue A202 is a topological domain, lumenal. A helical transmembrane segment spans residues 203–223; the sequence is LEGGLLLAMFNLAHIAEEFFT. Residues 224–361 lie on the Stromal side of the membrane; that stretch reads SRSMVDVKEL…KPKLQRWLDE (138 aa). The helical transmembrane segment at 362–384 threads the bilayer; that stretch reads FGENYSKVVVVLSLAIAFLGPFL. Over 385-398 the chain is Lumenal; sequence FKWPFLSTAACRGS. The helical transmembrane segment at 399–416 threads the bilayer; sequence VYRALGLMVAASPCALAV. Topologically, residues 417-737 are stromal; sequence APLAYATAIS…AKSRQTTSLV (321 aa). D453 acts as the 4-aspartylphosphate intermediate in catalysis. Residues E682 and D686 each contribute to the Mg(2+) site. A helical transmembrane segment spans residues 738 to 757; the sequence is KQNVALALTSIFLAALPSVL. At 758–762 the chain is on the lumenal side; sequence GFVPL. Residues 763–781 form a helical membrane-spanning segment; it reads WLTVLLHEGGTLLVCLNSV. At 782–819 the chain is on the stromal side; sequence RGLNDPSWSWKQDIVHLINKLRSQEPTSSSSNSLSSAH.

The protein belongs to the cation transport ATPase (P-type) (TC 3.A.3) family. Type IB subfamily.

The protein resides in the plastid. The protein localises to the chloroplast inner membrane. The catalysed reaction is Zn(2+)(in) + ATP + H2O = Zn(2+)(out) + ADP + phosphate + H(+). It carries out the reaction Cd(2+)(in) + ATP + H2O = Cd(2+)(out) + ADP + phosphate + H(+). Its function is as follows. Involved in cadmium/zinc transport. The sequence is that of Probable cadmium/zinc-transporting ATPase HMA1, chloroplastic (HMA1) from Arabidopsis thaliana (Mouse-ear cress).